A 166-amino-acid polypeptide reads, in one-letter code: FMN reductase (NADH) RutF (166 aa).

The protein belongs to the non-flavoprotein flavin reductase family. RutF subfamily.

The enzyme catalyses FMNH2 + NAD(+) = FMN + NADH + 2 H(+). In terms of biological role, catalyzes the reduction of FMN to FMNH2 which is used to reduce pyrimidine by RutA via the Rut pathway. In Cronobacter turicensis (strain DSM 18703 / CCUG 55852 / LMG 23827 / z3032), this protein is FMN reductase (NADH) RutF.